A 222-amino-acid polypeptide reads, in one-letter code: UPF0173 metal-dependent hydrolase Nther_2337 (222 aa).

The protein belongs to the UPF0173 family.

This Natranaerobius thermophilus (strain ATCC BAA-1301 / DSM 18059 / JW/NM-WN-LF) protein is UPF0173 metal-dependent hydrolase Nther_2337.